The sequence spans 524 residues: Xanthotoxin 5-hydroxylase CYP82C4 (524 aa).

A helical transmembrane segment spans residues 1–21 (MDTSLFSLFVPILVFVFIALF). C463 contacts heme.

The protein belongs to the cytochrome P450 family. The cofactor is heme. As to expression, expressed in both primary and lateral roots under iron-deficient conditions, except in apical root zones, and mostly in the root epidermal layer.

The protein localises to the membrane. It carries out the reaction fraxetin + reduced [NADPH--hemoprotein reductase] + O2 = sideretin (reduced form) + oxidized [NADPH--hemoprotein reductase] + H2O + H(+). It catalyses the reaction xanthotoxin + reduced [NADPH--hemoprotein reductase] + O2 = 5-hydroxyxanthotoxin + oxidized [NADPH--hemoprotein reductase] + H2O + 2 H(+). It participates in phenylpropanoid metabolism. Functionally, can hydroxylate xanthotoxin (8-methoxypsoralen) to form 5-hydroxyxanthotoxin (5-hydroxy-8-methoxypsoralen) in vivo and in vitro. Involved in the early iron deficiency response, possibly through an IDE1-like mediated pathway. Involved in the pathway of sideretin biosynthesis from feruloyl CoA, a redox-active catecholic metabolite exuded by roots in response to iron deficiency in order to facilitate the uptake of iron; this pathway consists in the successive conversion from feruloyl CoA to scopoletin, from scopoletin to fraxetin and from fraxetin to sideretin. Catalyzes the biosynthesis of sideretin via fraxetin hydroxylation. In Arabidopsis thaliana (Mouse-ear cress), this protein is Xanthotoxin 5-hydroxylase CYP82C4.